We begin with the raw amino-acid sequence, 438 residues long: Mannan endo-1,4-beta-mannosidase F (438 aa).

The first 17 residues, 1–17, serve as a signal peptide directing secretion; that stretch reads MHPLPSVALLSAIGAVA. The 36-residue stretch at 19 to 54 folds into the CBM1 domain; the sequence is QVGPWGQCGGRSYTGETSCVSGWSCVLFNEWYSQCQ. The tract at residues 60-96 is ser-rich linker; sequence STSSVSATAAPSSTSSSKESVPSATTSKKPVPTGSSS. The span at 61–86 shows a compositional bias: low complexity; it reads TSSVSATAAPSSTSSSKESVPSATTS. The interval 61 to 92 is disordered; the sequence is TSSVSATAAPSSTSSSKESVPSATTSKKPVPT. Residues 97–438 form a catalytic region; that stretch reads FVKADGLKFN…CGVADHLSTL (342 aa). The substrate site is built by W149 and N263. The active-site Proton donor is E264. N-linked (GlcNAc...) asparagine glycosylation is present at N277. Y339 serves as a coordination point for substrate. The active-site Nucleophile is the E373. A substrate-binding site is contributed by W402.

Belongs to the glycosyl hydrolase 5 (cellulase A) family.

The protein resides in the secreted. The enzyme catalyses Random hydrolysis of (1-&gt;4)-beta-D-mannosidic linkages in mannans, galactomannans and glucomannans.. Endo-1,4-mannanase, a crucial enzyme for depolymerization of seed galactomannans and wood galactoglucomannans. The sequence is that of Mannan endo-1,4-beta-mannosidase F (manF) from Aspergillus fumigatus (strain ATCC MYA-4609 / CBS 101355 / FGSC A1100 / Af293) (Neosartorya fumigata).